The chain runs to 434 residues: MSIVVSKSAPVVVRPSEPATSTADKILLSTLDKPVATIPVTVLLAFDHPIHDATAETIKTALAQSLVHYYPIAGRISCDNDDGGHFYIDCTGEDLGVTFVAASANCTMEELMCLVDDQAPDDETAVVQQLAFNCTPDDLHHRLLWVQVTTLNCGGFVVGVTWSHGVADGPGIAQFIQAVGELARGLPSPSVVPVRLDDKIATQAVPPFTMAVHRFISGLKPVSNLDVRNVTVSSSLINHIIVGARRRATVFEAVAAVLWQCRTRVVMTDPEAPAVLLFAVNARKYLGAKDGYYGCCTAMHMAVSKSGTVANGDIMKLVGIIRRAKEQIPEQLKADDGEMMLRTMVGEKQVNGYESLLYLTSWRNIGFEDVDFGSGKTARVMTYPPRMLSMMPRIAPICFMLKATEEGVRVMSDCVTADHADAFYQEIAKLKATT.

Active-site proton acceptor residues include His164 and Asp371.

This sequence belongs to the plant acyltransferase family.

Functionally, involved in the incorporation of ferulate into the cell wall. This chain is Acyl transferase 15, found in Oryza sativa subsp. japonica (Rice).